Consider the following 566-residue polypeptide: Cyclin-dependent kinase-like 2 (566 aa).

One can recognise a Protein kinase domain in the interval 4–287 (YENLGLVGEG…CAELLHHDFF (284 aa)). Residues 10–18 (VGEGSYGMV) and K33 each bind ATP. The short motif at 45 to 51 (KKIAMRE) is the [NKR]KIAxRE element. D126 functions as the Proton acceptor in the catalytic mechanism. Disordered regions lie at residues 307–334 (DARNISLSKKSQNRKKEKEKDDSLGEER) and 545–566 (QVSGSPLSDGSEADSPWMEHQH). Basic and acidic residues predominate over residues 320-334 (RKKEKEKDDSLGEER).

The protein belongs to the protein kinase superfamily. CMGC Ser/Thr protein kinase family. CDC2/CDKX subfamily.

The protein resides in the cytoplasm. The protein localises to the nucleus. The catalysed reaction is L-seryl-[protein] + ATP = O-phospho-L-seryl-[protein] + ADP + H(+). It catalyses the reaction L-threonyl-[protein] + ATP = O-phospho-L-threonyl-[protein] + ADP + H(+). The polypeptide is Cyclin-dependent kinase-like 2 (Oryctolagus cuniculus (Rabbit)).